We begin with the raw amino-acid sequence, 41 residues long: Large ribosomal subunit protein bL36A (41 aa).

Belongs to the bacterial ribosomal protein bL36 family.

The sequence is that of Large ribosomal subunit protein bL36A from Vibrio cholerae serotype O1 (strain ATCC 39541 / Classical Ogawa 395 / O395).